The primary structure comprises 144 residues: Bradykinin-potentiating and C-type natriuretic peptides isoform 2 (144 aa).

The signal sequence occupies residues 1-23; the sequence is MVLSRLAASGLLLLALLALSVDG. The propeptide occupies 24-30; sequence KPVQQWA. Glutamine 31 is subject to Pyrrolidone carboxylic acid. The propeptide occupies 41-47; sequence LLVQQWA. Pyrrolidone carboxylic acid is present on glutamine 48. Residues 61-67 constitute a propeptide that is removed on maturation; it reads LTVQQWA. Glutamine 68 is subject to Pyrrolidone carboxylic acid. The propeptide occupies 78–84; it reads LTVQQWA. The segment at 81–110 is disordered; it reads QQWAQGRPPGPPIPPLTVQQWAQARPPHPP. Glutamine 85 is modified (pyrrolidone carboxylic acid). Residues 96-102 constitute a propeptide that is removed on maturation; that stretch reads LTVQQWA. Glutamine 103 is modified (pyrrolidone carboxylic acid). Positions 114 to 116 are excised as a propeptide; that stretch reads APL. A Pyrrolidone carboxylic acid modification is found at glutamine 117. A propeptide is located at residue valine 122. At glutamine 123 the chain carries Pyrrolidone carboxylic acid. Residues 128–144 constitute a propeptide that is removed on maturation; sequence VQKWAPVQKWAPLLQPT.

The protein in the N-terminal section; belongs to the bradykinin-potentiating peptide family. As to expression, expressed by venom gland.

Its subcellular location is the secreted. The protein resides in the cytoplasm. It localises to the cytosol. In terms of biological role, peptide with several activities. It inhibits the activity of the angiotensin-converting enzyme (ACE) by a preferential interaction with its C-domain. It evokes transient hypotension (-14 mmHg) similar to that evoked by 0.5 ug of bradykinin, when injected alone into rats. It has a high bradykinin-potentiating effect (120%), when 60 nmol of BPP-10c are coinjected with 0.5 ug of bradykinin into rats. Does not affect angiotensin-1 pressor effects. Shows potent and long-lasting antihypertensive activity as well as a reduction of the heart rate. It also binds and dose-dependently promotes the activation of cytosolic argininosuccinate synthase (ASS1), an enzyme that catalyzes the conversion of citrulline, L-aspartate and ATP to argininosuccinate, AMP and pyrophosphate. It also enhances ASS1-dependent arginine production in HEK 293 cells, as well as in spontaneous hypertensive rat (SHR) and Wistar rat plasma. In addition, it induces the production of nitric-oxide (NO) by HUVEC cells via the endothelial nitric-oxide synthase (NOS3), which use arginine as a substrate and produce NO. It has been shown to be internalized by ASS1-expressing endothelial (HUVEC) and kidney (HEK 293) cells, and is detected homogenously distributed within the cell cytoplasm for up to 2 hours. Functionally, acts as indirect hypotensive agent. Increases leukocyte rolling flux and adhesion by five-fold in post-capillary venules, without any increments in vasodilation of arterioles. Its function is as follows. Acts as indirect hypotensive agent. Potently induces vasodilation of arterioles, with only a small increase in leukocyte rolling flux. This is Bradykinin-potentiating and C-type natriuretic peptides isoform 2 from Bothrops jararacussu (Jararacussu).